A 391-amino-acid chain; its full sequence is Flagellin (391 aa).

This sequence belongs to the bacterial flagellin family.

It localises to the secreted. Its subcellular location is the bacterial flagellum. In terms of biological role, flagellin is the subunit protein which polymerizes to form the filaments of bacterial flagella. This chain is Flagellin (flaA), found in Bordetella bronchiseptica (strain ATCC BAA-588 / NCTC 13252 / RB50) (Alcaligenes bronchisepticus).